The chain runs to 693 residues: Triadin (693 aa).

Over 1-47 the chain is Cytoplasmic; that stretch reads MTEITAEGNASTTTTVIDNKNGCIPKSPGKVLKRSVTEDIVTTFSSP. Residues 48–68 traverse the membrane as a helical segment; it reads AAWLLVIALIITWSAVAIVMF. Residues 69–693 lie on the Lumenal side of the membrane; it reads DLVDYKNFSA…NSPGQKQQEQ (625 aa). Residues 117–130 show a composition bias toward acidic residues; the sequence is EGDEDDEDADEDID. Disordered regions lie at residues 117–260, 278–649, and 666–693; these read EGDE…AVHE, GDLK…QTRP, and FQFP…QQEQ. Composition is skewed to basic and acidic residues over residues 131-241 and 249-260; these read KGEI…KETP and KKDDKEMPAVHE. A Phosphoserine modification is found at serine 301. Over residues 305–352 the composition is skewed to basic and acidic residues; that stretch reads LEEKEKEEKKKMEKKDTSDTKKKEKEVKKKSEETTIDGKGKEPGKPPE. A compositionally biased stretch (polar residues) spans 354 to 364; it reads KQMTAKLTTQA. Basic and acidic residues-rich tracts occupy residues 366–427 and 438–502; these read ARKD…KEEI and GKKE…KEAK. An N-linked (GlcNAc...) asparagine glycan is attached at asparagine 515. 2 stretches are compositionally biased toward basic and acidic residues: residues 526-547 and 558-579; these read VKPE…DKPK and DSGK…REEN. Residue asparagine 584 is glycosylated (N-linked (GlcNAc...) asparagine). A compositionally biased stretch (basic and acidic residues) spans 587–637; it reads KAEKPGKIPKDSKEAPASKKDKEDSKEAPTSKKDKEDSKDVPHSKKDKEVT. A compositionally biased stretch (polar residues) spans 672–693; that stretch reads PVQQPGENPGKTNSPGQKQQEQ.

As to quaternary structure, homooligomer of variable subunit number; disulfide-linked. Interacts with CASQ1 and RYR1 in skeletal muscle. Interacts with CASQ2. Post-translationally, phosphorylated by CaMK2. In terms of processing, N-glycosylated. As to expression, detected in heart (at protein level). Detected in heart.

It is found in the sarcoplasmic reticulum membrane. Functionally, contributes to the regulation of lumenal Ca2+ release via the sarcoplasmic reticulum calcium release channels RYR1 and RYR2, a key step in triggering skeletal and heart muscle contraction. Required for normal organization of the triad junction, where T-tubules and the sarcoplasmic reticulum terminal cisternae are in close contact. Required for normal skeletal muscle strength. Plays a role in excitation-contraction coupling in the heart and in regulating the rate of heart beats. The polypeptide is Triadin (Mus musculus (Mouse)).